A 358-amino-acid chain; its full sequence is tRNA-specific 2-thiouridylase MnmA (358 aa).

ATP is bound by residues alanine 8–serine 15 and methionine 35. The interaction with target base in tRNA stretch occupies residues asparagine 95 to aspartate 97. Catalysis depends on cysteine 100, which acts as the Nucleophile. Cysteine 100 and cysteine 194 are oxidised to a cystine. Residue glycine 124 coordinates ATP. The interval lysine 144–glutamine 146 is interaction with tRNA. Cysteine 194 (cysteine persulfide intermediate) is an active-site residue. The tract at residues arginine 301–tyrosine 302 is interaction with tRNA.

The protein belongs to the MnmA/TRMU family.

The protein localises to the cytoplasm. The enzyme catalyses S-sulfanyl-L-cysteinyl-[protein] + uridine(34) in tRNA + AH2 + ATP = 2-thiouridine(34) in tRNA + L-cysteinyl-[protein] + A + AMP + diphosphate + H(+). Functionally, catalyzes the 2-thiolation of uridine at the wobble position (U34) of tRNA, leading to the formation of s(2)U34. The chain is tRNA-specific 2-thiouridylase MnmA from Chlamydia trachomatis serovar L2 (strain ATCC VR-902B / DSM 19102 / 434/Bu).